A 182-amino-acid chain; its full sequence is MASSLMSNAATTMAAATTTAQANMVAPFNGLKSISAFPVTRKNNDITSVASNGGRVQCMVWPPLGMKKFETLSYLPPLSEESLLKEVQYLLNNGWVPCLEFEPTHGFVYREHGNTPGYYDGRYWTMWKLPMFGCTDPSQVVAELEEAKKAYPEAFIRIIGFDNVRQVQCVSFIAYKPASYGA.

The N-terminal 49 residues, 1-49 (MASSLMSNAATTMAAATTTAQANMVAPFNGLKSISAFPVTRKNNDITSV), are a transit peptide targeting the chloroplast.

It belongs to the RuBisCO small chain family. In terms of assembly, heterohexadecamer of 8 large and 8 small subunits.

It is found in the plastid. The protein localises to the chloroplast. RuBisCO catalyzes two reactions: the carboxylation of D-ribulose 1,5-bisphosphate, the primary event in carbon dioxide fixation, as well as the oxidative fragmentation of the pentose substrate. Both reactions occur simultaneously and in competition at the same active site. Although the small subunit is not catalytic it is essential for maximal activity. This Mesembryanthemum crystallinum (Common ice plant) protein is Ribulose bisphosphate carboxylase small subunit, chloroplastic 5.